The primary structure comprises 374 residues: Cyclin-D (374 aa).

This sequence belongs to the cyclin family. Cyclin D subfamily.

This chain is Cyclin-D (CycD), found in Ostreococcus tauri.